We begin with the raw amino-acid sequence, 466 residues long: 55 kDa erythrocyte membrane protein (466 aa).

Thr-2 is modified (N-acetylthreonine). Position 19 is a phosphoserine (Ser-19). Position 49 is a phosphothreonine (Thr-49). Phosphoserine occurs at positions 57 and 110. The PDZ domain maps to 71–152 (LIQFEKVTEE…MISLKVIPNQ (82 aa)). In terms of domain architecture, SH3 spans 158-228 (ALQMFMRAQF…PSPELQEWRV (71 aa)). Phosphoserine is present on Ser-243. Residues 268–466 (VVSYEEVVRL…PQWVPVSWVY (199 aa)) form an interaction with PALS1 region. A Guanylate kinase-like domain is found at 282-451 (RKTLVLIGAS…TLKTLQETFD (170 aa)).

The protein belongs to the MAGUK family. Heterodimer with PALS1. Interacts with DLG5 and NF2. Interacts (via guanylate kinase-like domain) with WHRN (via third PDZ domain). Interacts with PALS1. Palmitoylated.

Its subcellular location is the cell membrane. The protein resides in the cell projection. The protein localises to the stereocilium. Functionally, essential regulator of neutrophil polarity. Regulates neutrophil polarization by regulating AKT1 phosphorylation through a mechanism that is independent of PIK3CG activity. The chain is 55 kDa erythrocyte membrane protein (MPP1) from Bos taurus (Bovine).